The primary structure comprises 119 residues: Large ribosomal subunit protein bL12 (119 aa).

Belongs to the bacterial ribosomal protein bL12 family. As to quaternary structure, homodimer. Part of the ribosomal stalk of the 50S ribosomal subunit. Forms a multimeric L10(L12)X complex, where L10 forms an elongated spine to which 2 to 4 L12 dimers bind in a sequential fashion. Binds GTP-bound translation factors.

In terms of biological role, forms part of the ribosomal stalk which helps the ribosome interact with GTP-bound translation factors. Is thus essential for accurate translation. The polypeptide is Large ribosomal subunit protein bL12 (Colwellia psychrerythraea (strain 34H / ATCC BAA-681) (Vibrio psychroerythus)).